We begin with the raw amino-acid sequence, 105 residues long: Met repressor (105 aa).

Belongs to the MetJ family. As to quaternary structure, homodimer.

The protein localises to the cytoplasm. In terms of biological role, this regulatory protein, when combined with SAM (S-adenosylmethionine) represses the expression of the methionine regulon and of enzymes involved in SAM synthesis. In Proteus mirabilis (strain HI4320), this protein is Met repressor.